Reading from the N-terminus, the 223-residue chain is uncharacterized protein (223 aa).

Residues 1–17 (MLGQGLIFISLAFVAHA) form the signal peptide. The N-linked (GlcNAc...) asparagine glycan is linked to Asn-58. The segment at 149–188 (VRKKGSRPSKPQKEKQGNKQGSKTEESPNVDEDELESEPE) is disordered. Residues 159–174 (PQKEKQGNKQGSKTEE) are compositionally biased toward basic and acidic residues. The segment covering 176 to 187 (PNVDEDELESEP) has biased composition (acidic residues). Residues 191 to 211 (TFFQKYGLYLIPILFLIIMSG) traverse the membrane as a helical segment.

Its subcellular location is the endoplasmic reticulum membrane. This is an uncharacterized protein from Schizosaccharomyces pombe (strain 972 / ATCC 24843) (Fission yeast).